A 215-amino-acid chain; its full sequence is MSFLSMSAPSGNVFMVVAPSGAGKSSLVRALLDRDPSLVLSISCTTRAPRPGEQDGREYRFVDQAEFARLRDAQQLLEWAEVHGNFYGTPRDRIDEATRAGHDVLLEIDWQGARQVKQRYPEAIGIFVLPPSIDELESRLKARGQDAPQVIARRLLAAGGEIAHAPECEYVIINQEFSVALTELVQIISAARLRFSSQAVRNAQLFSQLGIPAAH.

The Guanylate kinase-like domain maps to 11 to 189; sequence GNVFMVVAPS…ALTELVQIIS (179 aa). 18 to 25 lines the ATP pocket; it reads APSGAGKS.

This sequence belongs to the guanylate kinase family.

It is found in the cytoplasm. The enzyme catalyses GMP + ATP = GDP + ADP. Essential for recycling GMP and indirectly, cGMP. The protein is Guanylate kinase of Bordetella bronchiseptica (strain ATCC BAA-588 / NCTC 13252 / RB50) (Alcaligenes bronchisepticus).